The chain runs to 289 residues: Serine/threonine-protein phosphatase Pgam5, mitochondrial (289 aa).

It belongs to the phosphoglycerate mutase family. BPG-dependent PGAM subfamily. Interacts with Pk92B/ASK1.

The protein localises to the mitochondrion outer membrane. The catalysed reaction is O-phospho-L-seryl-[protein] + H2O = L-seryl-[protein] + phosphate. It catalyses the reaction O-phospho-L-threonyl-[protein] + H2O = L-threonyl-[protein] + phosphate. Its function is as follows. Displays phosphatase activity for serine/threonine residues, and dephosphorylates and activates Pk92B kinase. Has apparently no phosphoglycerate mutase activity. This chain is Serine/threonine-protein phosphatase Pgam5, mitochondrial, found in Drosophila grimshawi (Hawaiian fruit fly).